The primary structure comprises 614 residues: ATP-dependent zinc metalloprotease FtsH (614 aa).

Topologically, residues 1–5 (MLPIR) are cytoplasmic. The chain crosses the membrane as a helical span at residues 6–26 (WFLALLAVFLAVAGLDLWFSQ). Over 27 to 127 (TGARPSSATG…AVSARERTAS (101 aa)) the chain is Periplasmic. The chain crosses the membrane as a helical span at residues 128 to 148 (IVHAIVHPLGLITLIVGILFV). Residues 149 to 614 (VQRYAGRFTA…AQHPPSALAG (466 aa)) lie on the Cytoplasmic side of the membrane. ATP is bound at residue 214–221 (GPPGTGKT). Zn(2+) is bound at residue H436. Residue E437 is part of the active site. Residues H440 and D513 each coordinate Zn(2+).

This sequence in the central section; belongs to the AAA ATPase family. In the C-terminal section; belongs to the peptidase M41 family. As to quaternary structure, homohexamer. It depends on Zn(2+) as a cofactor.

It localises to the cell inner membrane. In terms of biological role, acts as a processive, ATP-dependent zinc metallopeptidase for both cytoplasmic and membrane proteins. Plays a role in the quality control of integral membrane proteins. This Opitutus terrae (strain DSM 11246 / JCM 15787 / PB90-1) protein is ATP-dependent zinc metalloprotease FtsH.